We begin with the raw amino-acid sequence, 437 residues long: AA9 family lytic polysaccharide monooxygenase H (437 aa).

Positions 1-21 (MNLSLFTLALVACYSSQLAAA) are cleaved as a signal peptide. Residue His22 coordinates Cu(2+). Cys64 and Cys193 form a disulfide bridge. N-linked (GlcNAc...) asparagine glycosylation is found at Asn67 and Asn79. His104 provides a ligand contact to Cu(2+). 2 N-linked (GlcNAc...) asparagine glycosylation sites follow: Asn120 and Asn138. 2 residues coordinate O2: His178 and Gln188. Cu(2+) is bound at residue Tyr190. Asn252 and Asn307 each carry an N-linked (GlcNAc...) asparagine glycan. A Chitin-binding type-1 domain is found at 392-437 (DGKCGDGNGQTCKGSLLGECCSQVGYCGSSESYCGVGCQGNFGVCG). 4 disulfide bridges follow: Cys395–Cys412, Cys403–Cys418, Cys411–Cys425, and Cys429–Cys436.

It belongs to the polysaccharide monooxygenase AA9 family. Cu(2+) serves as cofactor.

Its subcellular location is the secreted. It carries out the reaction [(1-&gt;4)-beta-D-glucosyl]n+m + reduced acceptor + O2 = 4-dehydro-beta-D-glucosyl-[(1-&gt;4)-beta-D-glucosyl]n-1 + [(1-&gt;4)-beta-D-glucosyl]m + acceptor + H2O.. In terms of biological role, lytic polysaccharide monooxygenase (LPMO) that depolymerizes crystalline and amorphous polysaccharides via the oxidation of scissile alpha- or beta-(1-4)-glycosidic bonds, yielding C1 and C4 oxidation products. Catalysis by LPMOs requires the reduction of the active-site copper from Cu(II) to Cu(I) by a reducing agent and H(2)O(2) or O(2) as a cosubstrate. The protein is AA9 family lytic polysaccharide monooxygenase H of Botryotinia fuckeliana (strain B05.10) (Noble rot fungus).